The primary structure comprises 613 residues: tRNA 5-methylaminomethyl-2-thiouridine biosynthesis bifunctional protein MnmC (613 aa).

The segment at 1–225 (MKKAKLIFKD…KREMIKAYLE (225 aa)) is tRNA (mnm(5)s(2)U34)-methyltransferase. Residues 252–613 (IGAGISSAVL…FLIRKLKKGL (362 aa)) form an FAD-dependent cmnm(5)s(2)U34 oxidoreductase region.

The protein in the N-terminal section; belongs to the methyltransferase superfamily. tRNA (mnm(5)s(2)U34)-methyltransferase family. In the C-terminal section; belongs to the DAO family. FAD is required as a cofactor.

The protein resides in the cytoplasm. It catalyses the reaction 5-aminomethyl-2-thiouridine(34) in tRNA + S-adenosyl-L-methionine = 5-methylaminomethyl-2-thiouridine(34) in tRNA + S-adenosyl-L-homocysteine + H(+). Functionally, catalyzes the last two steps in the biosynthesis of 5-methylaminomethyl-2-thiouridine (mnm(5)s(2)U) at the wobble position (U34) in tRNA. Catalyzes the FAD-dependent demodification of cmnm(5)s(2)U34 to nm(5)s(2)U34, followed by the transfer of a methyl group from S-adenosyl-L-methionine to nm(5)s(2)U34, to form mnm(5)s(2)U34. This is tRNA 5-methylaminomethyl-2-thiouridine biosynthesis bifunctional protein MnmC from Campylobacter jejuni subsp. jejuni serotype O:6 (strain 81116 / NCTC 11828).